The primary structure comprises 290 residues: ATP synthase gamma chain (290 aa).

It belongs to the ATPase gamma chain family. F-type ATPases have 2 components, CF(1) - the catalytic core - and CF(0) - the membrane proton channel. CF(1) has five subunits: alpha(3), beta(3), gamma(1), delta(1), epsilon(1). CF(0) has three main subunits: a, b and c.

Its subcellular location is the cell membrane. Its function is as follows. Produces ATP from ADP in the presence of a proton gradient across the membrane. The gamma chain is believed to be important in regulating ATPase activity and the flow of protons through the CF(0) complex. The polypeptide is ATP synthase gamma chain (Wolbachia sp. subsp. Brugia malayi (strain TRS)).